Reading from the N-terminus, the 101-residue chain is Integration host factor subunit beta (101 aa).

The segment at 62 to 84 is disordered; the sequence is RNPKTGESVALPGKHVPHFKPGK.

The protein belongs to the bacterial histone-like protein family. Heterodimer of an alpha and a beta chain.

Its function is as follows. This protein is one of the two subunits of integration host factor, a specific DNA-binding protein that functions in genetic recombination as well as in transcriptional and translational control. The polypeptide is Integration host factor subunit beta (Stenotrophomonas maltophilia (strain K279a)).